Reading from the N-terminus, the 102-residue chain is Small integral membrane protein 29 (102 aa).

Residue Asn3 is glycosylated (N-linked (GlcNAc...) asparagine). Residues 21-41 traverse the membrane as a helical segment; sequence VLGPFFLITLVGVVVAVVMYV.

Expressed in spleen, thymus, prostate, testis, uterus, small intestine, colon and peripheral blood leukocytes.

It localises to the membrane. The sequence is that of Small integral membrane protein 29 from Homo sapiens (Human).